The primary structure comprises 738 residues: Ribosomal RNA large subunit methyltransferase K/L (738 aa).

In terms of domain architecture, THUMP spans 46 to 157 (TAYRVCLWSR…ADQAVIGLDL (112 aa)).

This sequence belongs to the methyltransferase superfamily. RlmKL family.

It localises to the cytoplasm. It carries out the reaction guanosine(2445) in 23S rRNA + S-adenosyl-L-methionine = N(2)-methylguanosine(2445) in 23S rRNA + S-adenosyl-L-homocysteine + H(+). The enzyme catalyses guanosine(2069) in 23S rRNA + S-adenosyl-L-methionine = N(2)-methylguanosine(2069) in 23S rRNA + S-adenosyl-L-homocysteine + H(+). Specifically methylates the guanine in position 2445 (m2G2445) and the guanine in position 2069 (m7G2069) of 23S rRNA. This is Ribosomal RNA large subunit methyltransferase K/L from Methylococcus capsulatus (strain ATCC 33009 / NCIMB 11132 / Bath).